Reading from the N-terminus, the 513-residue chain is Quiannulatic acid synthase (513 aa).

The helical transmembrane segment at 14-34 threads the bilayer; it reads VFTFCNIILALASLVVAQCVY. Residue Asn308 is glycosylated (N-linked (GlcNAc...) asparagine). Residue Cys477 coordinates heme.

It belongs to the cytochrome P450 family. Heme is required as a cofactor.

The protein resides in the membrane. It catalyses the reaction quiannulatene + 3 reduced [NADPH--hemoprotein reductase] + 3 O2 = quiannulatate + 3 oxidized [NADPH--hemoprotein reductase] + 4 H2O + 4 H(+). Its pathway is secondary metabolite biosynthesis; terpenoid biosynthesis. Its function is as follows. Cytochrome P450 monooxygenase; part of the gene cluster that mediates the biosynthesis of the pentacyclic sesterterpene quiannulatic acid. The first step of the pathway is performed by the sesterterpene synthase (QS) that possesses both prenyl transferase and terpene cyclase activity, converting isopentenyl diphosphate and dimethylallyl diphosphate into geranylfarnesyl diphosphate (GFPP) and further converting GFPP into quiannulatene via an unprecedented cyclization mode which involves three rounds of hydride shifts and two successive C-C bond migrations to construct the 5-6-5-5-5 fused ring. The cytochrome P450 monooxygenase Qnn-P450 then oxidizes quiannulatene at C-19 in 3 successive reactions to afford quiannulatic acid. This chain is Quiannulatic acid synthase, found in Emericella variicolor (Aspergillus stellatus).